Reading from the N-terminus, the 145-residue chain is Large ribosomal subunit protein uL14m (145 aa).

The N-terminal 30 residues, 1-30 (MAALTGLWGSFAHVSRAFSQRCFSTSGSLS), are a transit peptide targeting the mitochondrion.

Belongs to the universal ribosomal protein uL14 family. In terms of assembly, component of the mitochondrial ribosome large subunit (39S) which comprises a 16S rRNA and about 50 distinct proteins. Interacts with MALSU1.

It localises to the mitochondrion. Its function is as follows. May form part of 2 intersubunit bridges in the assembled ribosome. Upon binding to MALSU1, intersubunit bridge formation is blocked, preventing ribosome formation and repressing translation. This Mus musculus (Mouse) protein is Large ribosomal subunit protein uL14m (Mrpl14).